The sequence spans 61 residues: Large ribosomal subunit protein bL28 (61 aa).

The segment at 1–26 (MAKDFVTGRKTTFGKKRSHALNQTNR) is disordered.

It belongs to the bacterial ribosomal protein bL28 family.

This is Large ribosomal subunit protein bL28 from Ligilactobacillus salivarius (strain UCC118) (Lactobacillus salivarius).